The sequence spans 230 residues: Inactive L-threonine 3-dehydrogenase, mitochondrial (230 aa).

This sequence belongs to the NAD(P)-dependent epimerase/dehydratase family. As to expression, expressed in all tissues examined. Detected in most cell types examined, but not observed in endothelial cells, glioma cell lines and some leukemia cell lines.

The protein localises to the mitochondrion. The polypeptide is Inactive L-threonine 3-dehydrogenase, mitochondrial (Homo sapiens (Human)).